Consider the following 579-residue polypeptide: Vitamin B6 transporter TPN1 (579 aa).

Topologically, residues 1–98 are cytoplasmic; it reads MNRDNMDTTK…LHVAGLWLSA (98 aa). The chain crosses the membrane as a helical span at residues 99 to 119; that stretch reads TGGLSSMSSFLLGPLLFGLSF. At 120-122 the chain is on the extracellular side; the sequence is RES. The chain crosses the membrane as a helical span at residues 123 to 143; that stretch reads VASSLISVTIGCLIAAYCSIM. Residues 144–157 lie on the Cytoplasmic side of the membrane; the sequence is GPQSGCRQMVTARY. The chain crosses the membrane as a helical span at residues 158–178; the sequence is LFGWWFVKLVALASIIGVMGW. At 179–198 the chain is on the extracellular side; it reads SVVNSVVGGEMLAAISNDKV. Residues 199-219 form a helical membrane-spanning segment; it reads PLWVGIVIVTVCSFLVAIFGI. At 220 to 221 the chain is on the cytoplasmic side; the sequence is KQ. The helical transmembrane segment at 222-242 threads the bilayer; that stretch reads VIKVETYLSVPVLTAFLLLYI. Topologically, residues 243–274 are extracellular; that stretch reads SSSDKYSFVNAYVSKGNLDSSTRKGNWMSFFS. Residues 275–295 traverse the membrane as a helical segment; the sequence is LCYSITATWGSITADYYILFP. The Cytoplasmic portion of the chain corresponds to 296–302; sequence EDTPYIQ. A helical transmembrane segment spans residues 303–323; it reads IFCLTFFGTFLPTCFVGILGL. The Extracellular portion of the chain corresponds to 324–362; the sequence is LLASVAMSYKPWSVEYDSHGMGGLLWAGFQRWNGFGKFC. The helical transmembrane segment at 363–383 threads the bilayer; sequence VVVLVFSLVSNNIINTYSAAF. Residues 384 to 394 lie on the Cytoplasmic side of the membrane; the sequence is SIQLSSVFCAK. A helical transmembrane segment spans residues 395–415; the sequence is IPRWFWSIVCTIICLVCALIG. The Extracellular portion of the chain corresponds to 416–421; the sequence is RNHFST. A helical membrane pass occupies residues 422 to 442; it reads ILGNFLPMIGYWISMYFILLF. Over 443–519 the chain is Cytoplasmic; that stretch reads EENLVFRRFF…EVLTHGYAAT (77 aa). The helical transmembrane segment at 520-540 threads the bilayer; the sequence is FAFIVGVAGVVVGMAQAYWIG. Topologically, residues 541–545 are extracellular; that stretch reads PIAAK. The chain crosses the membrane as a helical span at residues 546-566; sequence FGEYGGDVAMWLSMAFSGVVY. Residues 567–579 are Cytoplasmic-facing; it reads PPCRYLELRKFGR.

The protein belongs to the purine-cytosine permease (2.A.39) family.

Its subcellular location is the membrane. In terms of biological role, thiamine-regulated, high affinity import carrier of pyridoxine, pyridoxal and pyridoxamine. The sequence is that of Vitamin B6 transporter TPN1 (TPN1) from Saccharomyces cerevisiae (strain ATCC 204508 / S288c) (Baker's yeast).